The sequence spans 423 residues: UPF0229 protein PSEEN0423 (423 aa).

Residues 85–107 (GEHIARPQGGGGGGGRGKAGNSG) are disordered. Gly residues predominate over residues 92–107 (QGGGGGGGRGKAGNSG).

It belongs to the UPF0229 family.

The protein is UPF0229 protein PSEEN0423 of Pseudomonas entomophila (strain L48).